Here is a 1343-residue protein sequence, read N- to C-terminus: DNA-directed RNA polymerase subunit beta (1343 aa).

Belongs to the RNA polymerase beta chain family. As to quaternary structure, the RNAP catalytic core consists of 2 alpha, 1 beta, 1 beta' and 1 omega subunit. When a sigma factor is associated with the core the holoenzyme is formed, which can initiate transcription.

It catalyses the reaction RNA(n) + a ribonucleoside 5'-triphosphate = RNA(n+1) + diphosphate. Its function is as follows. DNA-dependent RNA polymerase catalyzes the transcription of DNA into RNA using the four ribonucleoside triphosphates as substrates. The chain is DNA-directed RNA polymerase subunit beta from Haemophilus influenzae (strain PittEE).